The sequence spans 193 residues: Acyl carrier protein phosphodiesterase (193 aa).

Belongs to the AcpH family.

It carries out the reaction holo-[ACP] + H2O = apo-[ACP] + (R)-4'-phosphopantetheine + H(+). Its function is as follows. Converts holo-ACP to apo-ACP by hydrolytic cleavage of the phosphopantetheine prosthetic group from ACP. This chain is Acyl carrier protein phosphodiesterase, found in Salmonella agona (strain SL483).